The following is a 120-amino-acid chain: Dynein 11 kDa light chain, flagellar outer arm (120 aa).

This sequence belongs to the dynein light chain family. Consists of at least 3 heavy chains (alpha, beta and gamma), 2 intermediate chains and 8 light chains.

Its subcellular location is the cytoplasm. The protein resides in the cytoskeleton. It localises to the flagellum axoneme. The polypeptide is Dynein 11 kDa light chain, flagellar outer arm (Chlamydomonas reinhardtii (Chlamydomonas smithii)).